We begin with the raw amino-acid sequence, 391 residues long: Phosphopentomutase (391 aa).

Mn(2+) is bound at residue Asp-14. The tract at residues 61 to 88 (IQGVPPDPAPTAFHGRMAERSEGKDTTT) is disordered. A compositionally biased stretch (basic and acidic residues) spans 76 to 87 (RMAERSEGKDTT). Residues Asp-286, His-291, Asp-327, His-328, and His-339 each contribute to the Mn(2+) site.

Belongs to the phosphopentomutase family. The cofactor is Mn(2+).

It is found in the cytoplasm. It carries out the reaction 2-deoxy-alpha-D-ribose 1-phosphate = 2-deoxy-D-ribose 5-phosphate. It catalyses the reaction alpha-D-ribose 1-phosphate = D-ribose 5-phosphate. It participates in carbohydrate degradation; 2-deoxy-D-ribose 1-phosphate degradation; D-glyceraldehyde 3-phosphate and acetaldehyde from 2-deoxy-alpha-D-ribose 1-phosphate: step 1/2. Isomerase that catalyzes the conversion of deoxy-ribose 1-phosphate (dRib-1-P) and ribose 1-phosphate (Rib-1-P) to deoxy-ribose 5-phosphate (dRib-5-P) and ribose 5-phosphate (Rib-5-P), respectively. The polypeptide is Phosphopentomutase (Anaeromyxobacter dehalogenans (strain 2CP-C)).